Here is an 80-residue protein sequence, read N- to C-terminus: Conotoxin VnMSGL-0121 (80 aa).

The signal sequence occupies residues 1–20; it reads MSGLGIMVLTLLLLVSMATS. Residues 21–44 constitute a propeptide that is removed on maturation; sequence HQDGGGKQATQRDAINVRRRRSIT. 3 cysteine pairs are disulfide-bonded: Cys52/Cys65, Cys56/Cys74, and Cys64/Cys78. At Phe79 the chain carries Phenylalanine amide.

This sequence belongs to the conotoxin O3 superfamily. Expressed by the venom duct.

The protein localises to the secreted. The polypeptide is Conotoxin VnMSGL-0121 (Conus ventricosus (Mediterranean cone)).